The chain runs to 542 residues: 1,3-beta-glucanosyltransferase gas1 (542 aa).

The first 19 residues, 1–19 (MKFSILSLAVAGLVGLAKA), serve as a signal peptide directing secretion. N-linked (GlcNAc...) asparagine glycosylation occurs at asparagine 35. Cysteine 70 and cysteine 99 are oxidised to a cystine. Tyrosine 88 is a binding site for (1,3-beta-D-glucosyl)n. An N-linked (GlcNAc...) asparagine glycan is attached at asparagine 91. (1,3-beta-D-glucosyl)n-binding residues include asparagine 156 and glutamate 157. Glutamate 157 functions as the Proton donor in the catalytic mechanism. Asparagine 161 carries an N-linked (GlcNAc...) asparagine glycan. The (1,3-beta-D-glucosyl)n site is built by aspartate 198 and arginine 203. Intrachain disulfides connect cysteine 212–cysteine 345, cysteine 230–cysteine 261, cysteine 367–cysteine 419, cysteine 376–cysteine 439, and cysteine 395–cysteine 400. Asparagine 249 carries an N-linked (GlcNAc...) asparagine glycan. The active-site Nucleophile is the glutamate 258. The N-linked (GlcNAc...) asparagine glycan is linked to asparagine 279. Tyrosine 290 lines the (1,3-beta-D-glucosyl)n pocket. N-linked (GlcNAc...) asparagine glycans are attached at residues asparagine 406, asparagine 484, asparagine 502, and asparagine 509. A disordered region spans residues 490-515 (MSTSYTSGSGSSNSSGSSSNSSSKSS). Serine 516 is lipidated: GPI-anchor amidated serine. Positions 517–542 (GASSYNLNMVITFLSVVIGGTAVLFI) are cleaved as a propeptide — removed in mature form.

Belongs to the glycosyl hydrolase 72 family. The GPI-anchor is attached to the protein in the endoplasmic reticulum and serves to target the protein to the cell surface. There, the glucosamine-inositol phospholipid moiety is cleaved off and the GPI-modified mannoprotein is covalently attached via its lipidless GPI glycan remnant to the 1,6-beta-glucan of the outer cell wall layer.

Its subcellular location is the secreted. It localises to the cell wall. The protein localises to the membrane. Its function is as follows. Splits internally a 1,3-beta-glucan molecule and transfers the newly generated reducing end (the donor) to the non-reducing end of another 1,3-beta-glucan molecule (the acceptor) forming a 1,3-beta linkage, resulting in the elongation of 1,3-beta-glucan chains in the cell wall. The chain is 1,3-beta-glucanosyltransferase gas1 (gas1) from Schizosaccharomyces pombe (strain 972 / ATCC 24843) (Fission yeast).